Here is a 249-residue protein sequence, read N- to C-terminus: uncharacterized protein (249 aa).

The protein resides in the cytoplasm. It is found in the nucleus. This is an uncharacterized protein from Schizosaccharomyces pombe (strain 972 / ATCC 24843) (Fission yeast).